Reading from the N-terminus, the 143-residue chain is Transcriptional regulator SlyA (143 aa).

The region spanning 2–135 (ESTLGSDLAR…LSGLIDKLEK (134 aa)) is the HTH marR-type domain. Residues 49-72 (QIQLAKAIGIEQPSLVRTLDQLEE) constitute a DNA-binding region (H-T-H motif).

This sequence belongs to the SlyA family. In terms of assembly, homodimer.

Transcription regulator that can specifically activate or repress expression of target genes. The polypeptide is Transcriptional regulator SlyA (Yersinia pestis bv. Antiqua (strain Antiqua)).